The following is a 166-amino-acid chain: KH homology domain-containing protein 1A (166 aa).

Residues 19–78 (PLVFDMEEDKEDYIFGPHDEYLHTLEVHSNTLIQLERWFTPTGQTRVTVVGPLKARLWVM) enclose the KH; atypical domain.

Belongs to the KHDC1 family.

It localises to the cytoplasm. Functionally, has pro-apoptotic activity. In Mus musculus (Mouse), this protein is KH homology domain-containing protein 1A (Khdc1a).